We begin with the raw amino-acid sequence, 228 residues long: Translation initiation factor 6 (228 aa).

This sequence belongs to the eIF-6 family.

Functionally, binds to the 50S ribosomal subunit and prevents its association with the 30S ribosomal subunit to form the 70S initiation complex. The protein is Translation initiation factor 6 of Thermococcus onnurineus (strain NA1).